The sequence spans 73 residues: uncharacterized protein (73 aa).

It belongs to the asfivirus DP63R family.

This is an uncharacterized protein from African swine fever virus (isolate Tick/Malawi/Lil 20-1/1983) (ASFV).